We begin with the raw amino-acid sequence, 365 residues long: tRNA/tmRNA (uracil-C(5))-methyltransferase (365 aa).

S-adenosyl-L-methionine is bound by residues Gln-189, Tyr-217, Asn-222, Glu-238, and Asp-298. Residue Cys-323 is the Nucleophile of the active site. Residue Glu-357 is the Proton acceptor of the active site.

Belongs to the class I-like SAM-binding methyltransferase superfamily. RNA M5U methyltransferase family. TrmA subfamily.

The enzyme catalyses uridine(54) in tRNA + S-adenosyl-L-methionine = 5-methyluridine(54) in tRNA + S-adenosyl-L-homocysteine + H(+). It carries out the reaction uridine(341) in tmRNA + S-adenosyl-L-methionine = 5-methyluridine(341) in tmRNA + S-adenosyl-L-homocysteine + H(+). In terms of biological role, dual-specificity methyltransferase that catalyzes the formation of 5-methyluridine at position 54 (m5U54) in all tRNAs, and that of position 341 (m5U341) in tmRNA (transfer-mRNA). The protein is tRNA/tmRNA (uracil-C(5))-methyltransferase of Pasteurella multocida (strain Pm70).